We begin with the raw amino-acid sequence, 884 residues long: Alanine--tRNA ligase (884 aa).

The Zn(2+) site is built by H565, H569, C672, and H676.

This sequence belongs to the class-II aminoacyl-tRNA synthetase family. Requires Zn(2+) as cofactor.

It localises to the cytoplasm. It carries out the reaction tRNA(Ala) + L-alanine + ATP = L-alanyl-tRNA(Ala) + AMP + diphosphate. Functionally, catalyzes the attachment of alanine to tRNA(Ala) in a two-step reaction: alanine is first activated by ATP to form Ala-AMP and then transferred to the acceptor end of tRNA(Ala). Also edits incorrectly charged Ser-tRNA(Ala) and Gly-tRNA(Ala) via its editing domain. This chain is Alanine--tRNA ligase, found in Sphingopyxis alaskensis (strain DSM 13593 / LMG 18877 / RB2256) (Sphingomonas alaskensis).